The chain runs to 554 residues: Esterase cest-33 (554 aa).

Residue G2 is the site of N-myristoyl glycine attachment. An intrachain disulfide couples C76 to C98. Catalysis depends on S208, which acts as the Acyl-ester intermediate. Active-site charge relay system residues include E331 and H446.

The protein belongs to the type-B carboxylesterase/lipase family.

The protein localises to the cytoplasm. It localises to the cell membrane. It carries out the reaction a carboxylic ester + H2O = an alcohol + a carboxylate + H(+). The polypeptide is Esterase cest-33 (Caenorhabditis elegans).